The sequence spans 206 residues: Glycerol-3-phosphate acyltransferase (206 aa).

Transmembrane regions (helical) follow at residues 4 to 24 (IIGI…LLVG), 55 to 75 (IIVL…PILL), 78 to 98 (ELHP…PVFA), 112 to 132 (MLLV…LTTL), 137 to 157 (MVSL…ITIG), and 158 to 178 (IVEQ…FVIF).

It belongs to the PlsY family. Probably interacts with PlsX.

Its subcellular location is the cell membrane. It carries out the reaction an acyl phosphate + sn-glycerol 3-phosphate = a 1-acyl-sn-glycero-3-phosphate + phosphate. It functions in the pathway lipid metabolism; phospholipid metabolism. Functionally, catalyzes the transfer of an acyl group from acyl-phosphate (acyl-PO(4)) to glycerol-3-phosphate (G3P) to form lysophosphatidic acid (LPA). This enzyme utilizes acyl-phosphate as fatty acyl donor, but not acyl-CoA or acyl-ACP. The protein is Glycerol-3-phosphate acyltransferase of Exiguobacterium sibiricum (strain DSM 17290 / CCUG 55495 / CIP 109462 / JCM 13490 / 255-15).